The chain runs to 367 residues: Protein NDRG4-B (367 aa).

Residues 1–12 are compositionally biased toward basic and acidic residues; that stretch reads MSELRFPEEKPL. Disordered stretches follow at residues 1–21 and 333–367; these read MSELRFPEEKPLLRGQDTEME and LTSASSVDGARPRPCTQSESSDGIGQINHTMEVSC. Over residues 347-367 the composition is skewed to polar residues; it reads CTQSESSDGIGQINHTMEVSC.

It belongs to the NDRG family.

The protein resides in the cytoplasm. It is found in the cytosol. Its function is as follows. Contributes to the maintenance of intracerebral BDNF levels within the normal range. May enhance growth factor-induced ERK1 and ERK2 phosphorylation. May attenuate growth factor-promoted ELK1 phosphorylation in a microtubule-dependent manner. The chain is Protein NDRG4-B (ndrg4-b) from Xenopus laevis (African clawed frog).